The following is a 325-amino-acid chain: Glutarate 2-hydroxylase (325 aa).

Histidine 160, aspartate 162, and histidine 292 together coordinate Fe cation.

This sequence belongs to the glutarate hydroxylase family. As to quaternary structure, homotetramer. The cofactor is Fe(2+).

It catalyses the reaction glutarate + 2-oxoglutarate + O2 = (S)-2-hydroxyglutarate + succinate + CO2. The protein operates within amino-acid degradation. Acts as an alpha-ketoglutarate-dependent dioxygenase catalyzing hydroxylation of glutarate (GA) to L-2-hydroxyglutarate (L2HG). Functions in a L-lysine degradation pathway that proceeds via cadaverine, glutarate and L-2-hydroxyglutarate. This chain is Glutarate 2-hydroxylase, found in Escherichia coli (strain UTI89 / UPEC).